Consider the following 425-residue polypeptide: Synaptotagmin-4 (425 aa).

The Vesicular segment spans residues 1–16; that stretch reads MAPITTSRVEFDEIPT. Residues 17-37 traverse the membrane as a helical segment; that stretch reads VVGIFSAFGLVFTVSLFAWIC. The Cytoplasmic portion of the chain corresponds to 38-425; the sequence is CQRRSAKSNK…IAKWHMLCDG (388 aa). 2 disordered regions span residues 102–121 and 126–147; these read NGNFPKTNPKAGSSSDLENV and FPETEKEAVSPESLKSSTSLTS. The segment covering 105 to 119 has biased composition (polar residues); that stretch reads FPKTNPKAGSSSDLE. S135 carries the phosphoserine; by MAPK8 modification. The segment covering 137–146 has biased composition (low complexity); it reads ESLKSSTSLT. 2 consecutive C2 domains span residues 153-274 and 287-420; these read KLGT…MLMT and GRGE…AKWH. Positions 246, 249, and 252 each coordinate Ca(2+).

Belongs to the synaptotagmin family. Interacts with KIF1A; the interaction increases in presence of calcium and decreases when SYT4 is phosphorylated at Ser-135. Ca(2+) serves as cofactor. Phosphorylation at Ser-135 by MAPK8/JNK1 reduces interaction with KIF1A and neuronal dense core vesicles mobility. Widely expressed. Expressed in the brain. Expressed in pituitary gland, cerebellum, cortex, hypothalamus and hippocampus.

Its subcellular location is the cytoplasmic vesicle. The protein localises to the secretory vesicle. The protein resides in the neuronal dense core vesicle membrane. In terms of biological role, synaptotagmin family member which does not bind Ca(2+). Involved in neuronal dense core vesicles (DCVs) mobility through its interaction with KIF1A. Upon increased neuronal activity, phosphorylation by MAPK8/JNK1 destabilizes the interaction with KIF1A and captures DCVs to synapses. Plays a role in dendrite formation by melanocytes. The chain is Synaptotagmin-4 (Syt4) from Rattus norvegicus (Rat).